A 161-amino-acid polypeptide reads, in one-letter code: Phosphopantetheine adenylyltransferase (161 aa).

Position 10 (Ser-10) interacts with substrate. Residues 10–11 (SF) and His-18 contribute to the ATP site. Substrate contacts are provided by Lys-42, Ala-75, and Arg-89. ATP is bound by residues 90–92 (GLR), Glu-100, and 125–131 (LSPISSS).

The protein belongs to the bacterial CoaD family. As to quaternary structure, homohexamer. It depends on Mg(2+) as a cofactor.

Its subcellular location is the cytoplasm. It catalyses the reaction (R)-4'-phosphopantetheine + ATP + H(+) = 3'-dephospho-CoA + diphosphate. It functions in the pathway cofactor biosynthesis; coenzyme A biosynthesis; CoA from (R)-pantothenate: step 4/5. Reversibly transfers an adenylyl group from ATP to 4'-phosphopantetheine, yielding dephospho-CoA (dPCoA) and pyrophosphate. This chain is Phosphopantetheine adenylyltransferase, found in Streptococcus agalactiae serotype III (strain NEM316).